We begin with the raw amino-acid sequence, 345 residues long: Alpha-2-HS-glycoprotein (345 aa).

The signal sequence occupies residues 1–18 (MKSLVLLLCFAQLWGCQS). The Cystatin fetuin-A-type 1 domain maps to 19–133 (APQGTGLGFR…QFRVMHTQCH (115 aa)). Cystine bridges form between cysteine 32/cysteine 336, cysteine 89/cysteine 100, cysteine 114/cysteine 132, cysteine 146/cysteine 149, cysteine 208/cysteine 219, and cysteine 230/cysteine 247. Asparagine 99 carries N-linked (GlcNAc...) asparagine glycosylation. Serine 134 is modified (phosphoserine). At threonine 135 the chain carries Phosphothreonine. At serine 138 the chain carries Phosphoserine. In terms of domain architecture, Cystatin fetuin-A-type 2 spans 144–250 (KLCPRCPLLT…EEVSVACKLF (107 aa)). 2 N-linked (GlcNAc...) asparagine glycosylation sites follow: asparagine 156 and asparagine 176. Phosphoserine is present on residues serine 305, serine 309, serine 312, and serine 314. Positions 312–334 (SASGETLHSPKVGQPGAAGPVSP) are disordered.

Belongs to the fetuin family. In terms of processing, phosphorylated by FAM20C in the extracellular medium. Liver is the major site of synthesis, but fetuin is also expressed in limb buds and other extrahepatic tissues during development.

It is found in the secreted. Probably involved in differentiation. Its function is as follows. (Microbial infection) Facilitates invasion of hepatocytes by Plasmodium berghei sporozoites. The protein is Alpha-2-HS-glycoprotein (Ahsg) of Mus musculus (Mouse).